We begin with the raw amino-acid sequence, 230 residues long: MTTLTARPEAITFDPQQSALIVVDMQNAYATPGGYLDLAGFDVSTTRPVIANIQTAVTAARAAGMLIIWFQNGWDEQYVEAGGPGSPNFHKSNALKTMRKQPQLQGKLLAKGSWDYQLVDELVPQPGDIVLPKPRYSGFFNTPLDSILRSRGIRHLVFTGIATNVCVESTLRDGFFLEYFGVVLEDATHQAGPKFAQKAALFNIETFFGWVSDVETFCDALSPTSFAHIA.

The Proton acceptor role is filled by D24. Residue K133 is part of the active site. C166 (nucleophile) is an active-site residue.

It belongs to the isochorismatase family. RutB subfamily.

The catalysed reaction is (Z)-3-ureidoacrylate + H2O + H(+) = (Z)-3-aminoacrylate + NH4(+) + CO2. It catalyses the reaction (Z)-3-ureidoacrylate + H2O = (Z)-3-aminoacrylate + carbamate + H(+). The enzyme catalyses (Z)-2-methylureidoacrylate + H2O + H(+) = (Z)-2-methylaminoacrylate + NH4(+) + CO2. Its function is as follows. Hydrolyzes ureidoacrylate to form aminoacrylate and carbamate. The carbamate hydrolyzes spontaneously, thereby releasing one of the nitrogen atoms of the pyrimidine ring as ammonia and one of its carbon atoms as CO2. The chain is Ureidoacrylate amidohydrolase RutB from Escherichia coli (strain K12 / MC4100 / BW2952).